Here is a 252-residue protein sequence, read N- to C-terminus: Probable transcriptional regulatory protein A1E_02520 (252 aa).

This sequence belongs to the TACO1 family.

It is found in the cytoplasm. The chain is Probable transcriptional regulatory protein A1E_02520 from Rickettsia canadensis (strain McKiel).